Reading from the N-terminus, the 527-residue chain is T-complex protein 1 subunit delta (527 aa).

The protein belongs to the TCP-1 chaperonin family. As to quaternary structure, heterooligomeric complex of about 850 to 900 kDa that forms two stacked rings, 12 to 16 nm in diameter.

It is found in the cytoplasm. In terms of biological role, molecular chaperone; assists the folding of proteins upon ATP hydrolysis. Known to play a role, in vitro, in the folding of actin and tubulin. This Schizosaccharomyces pombe (strain 972 / ATCC 24843) (Fission yeast) protein is T-complex protein 1 subunit delta (cct4).